Here is a 254-residue protein sequence, read N- to C-terminus: UPF0246 protein lpp1320 (254 aa).

This sequence belongs to the UPF0246 family.

In Legionella pneumophila (strain Paris), this protein is UPF0246 protein lpp1320.